The sequence spans 214 residues: Single-pass membrane and coiled-coil domain-containing protein 1 (214 aa).

The stretch at 5–40 (TTTLISLKEAMKRVDNKLRALDTQFKELDVTKDNLT) forms a coiled coil. The chain crosses the membrane as a helical span at residues 59 to 81 (IWTAALALGFTSMELNIVYSYVI). The disordered stretch occupies residues 193 to 214 (KQAQDPENSRAPLKELMPPVKD).

It is found in the membrane. The polypeptide is Single-pass membrane and coiled-coil domain-containing protein 1 (Smco1) (Mus musculus (Mouse)).